We begin with the raw amino-acid sequence, 417 residues long: Carbohydrate sulfotransferase 8 (417 aa).

Residues 1–10 (MTPRLGTMRL) are Cytoplasmic-facing. The helical; Signal-anchor for type II membrane protein transmembrane segment at 11–31 (ACMFSSILLFGAAGLLLFISL) threads the bilayer. Residues 32–417 (QDPIELSPQQ…NYSKPFSDLY (386 aa)) are Lumenal-facing. The disordered stretch occupies residues 47–101 (FSIRPQQPQHDSHLRISTEKGTRDSPSGSPRGLQLQAPDQPRPHPKAAGSPLRLR). Residues 56-69 (HDSHLRISTEKGTR) are compositionally biased toward basic and acidic residues. N-linked (GlcNAc...) asparagine glycans are attached at residues Asn-121 and Asn-122. Residues 191 to 197 (PKAGCSN) and 251 to 259 (REPFERLVS) each bind 3'-phosphoadenylyl sulfate. N-linked (GlcNAc...) asparagine glycans are attached at residues Asn-287, Asn-360, and Asn-408.

The protein belongs to the sulfotransferase 2 family. Strongly expressed in brain. Weakly expressed in lung and kidney. Weakly expressed in pituitary.

The protein resides in the golgi apparatus membrane. Catalyzes the transfer of sulfate to position 4 of non-reducing N-acetylgalactosamine (GalNAc) residues in both N-glycans and O-glycans. Required for biosynthesis of glycoprotein hormones lutropin and thyrotropin, by mediating sulfation of their carbohydrate structures. Only active against terminal GalNAcbeta1,GalNAcbeta. Not active toward chondroitin. This is Carbohydrate sulfotransferase 8 (Chst8) from Mus musculus (Mouse).